The chain runs to 100 residues: Urease subunit gamma (100 aa).

Belongs to the urease gamma subunit family. Heterotrimer of UreA (gamma), UreB (beta) and UreC (alpha) subunits. Three heterotrimers associate to form the active enzyme.

It localises to the cytoplasm. It carries out the reaction urea + 2 H2O + H(+) = hydrogencarbonate + 2 NH4(+). It functions in the pathway nitrogen metabolism; urea degradation; CO(2) and NH(3) from urea (urease route): step 1/1. In Rhizobium meliloti (strain 1021) (Ensifer meliloti), this protein is Urease subunit gamma.